The primary structure comprises 174 residues: Rubredoxin-2 (174 aa).

The 53-residue stretch at 1–53 (MAKYQCPDCEYIYDEVAGHPHEGFPPGTSWETIPEEWACPDCAVRDKADFVVI) folds into the Rubredoxin-like 1 domain. The Fe cation site is built by Cys-6, Cys-9, Cys-39, and Cys-42. Over residues 56–65 (GSASPASGAA) the composition is skewed to low complexity. The disordered stretch occupies residues 56–115 (GSASPASGAATPEVRTATTPPKAEASPQKSTGASTPSANNKAKAKAKAKPARAKSSKDST). Residues 97–109 (AKAKAKAKPARAK) are compositionally biased toward basic residues. The Rubredoxin-like 2 domain occupies 121–172 (FRKWICITCGHIYDEALGDETEGFAPGTLFEDIPDDWCCPDCGATKEDYVLH). Residues Cys-126, Cys-129, Cys-159, and Cys-162 each coordinate Fe cation.

This sequence belongs to the rubredoxin family. Requires Fe(3+) as cofactor.

The protein localises to the cytoplasm. It functions in the pathway hydrocarbon metabolism; alkane degradation. In terms of biological role, involved in the hydrocarbon hydroxylating system, which transfers electrons from NADH to rubredoxin reductase and then through rubredoxin to alkane 1 monooxygenase. In Alcanivorax borkumensis (strain ATCC 700651 / DSM 11573 / NCIMB 13689 / SK2), this protein is Rubredoxin-2 (alkG).